Consider the following 838-residue polypeptide: Collagen alpha-2(I) chain (838 aa).

The tract at residues 1-838 (GPMGIMGPRG…GTVGPAGIRS (838 aa)) is disordered. Low complexity predominate over residues 11-38 (FQGPAGEPGEPGQTGPAGARGPAGPPGK). The span at 39 to 53 (AGEDGHPGKPGRPGE) shows a compositional bias: basic and acidic residues. Composition is skewed to low complexity over residues 101-122 (SRGS…SAGP), 137-147 (PVGNTGPAGPA), 215-236 (NGES…RGIP), and 329-344 (AGNR…NGAQ). Residues 351–360 (GVQGGKGEQG) show a composition bias toward gly residues. Composition is skewed to low complexity over residues 407–424 (PGES…SRGP) and 436–446 (EPGVVGAPGTA). The span at 447-456 (GPAGSGGIPG) shows a compositional bias: gly residues. Low complexity-rich tracts occupy residues 479-523 (VGTT…PRGT), 530-550 (VGPA…QPGA), and 568-581 (SAGP…PGPA). A compositionally biased stretch (gly residues) spans 582–591 (GSRGDGGPPG). The span at 593–602 (TGFPGAAGRT) shows a compositional bias: low complexity. A compositionally biased stretch (gly residues) spans 633-642 (GETGAGGPPG). Positions 649–689 (TAGPQGIIGAPGIIGIPGSRGIPGVSGSVGEPGPIGISGPP) are enriched in low complexity. The segment covering 693 to 702 (GPSGGVGNPG) has biased composition (gly residues). Composition is skewed to low complexity over residues 703–718 (VNGA…NPGN), 736–758 (YAGN…VGPA), and 766–781 (EPGP…AIGP).

Belongs to the fibrillar collagen family. In terms of assembly, trimers of one alpha 2(I) and two alpha 1(I) chains. Interacts (via C-terminus) with TMEM131 (via PapD-L domain); the interaction is direct and is involved in assembly and TRAPPIII ER-to-Golgi transport complex-dependent secretion of collagen. In terms of processing, prolines at the third position of the tripeptide repeating unit (G-X-Y) are hydroxylated in some or all of the chains. Forms the fibrils of tendon, ligaments and bones. In bones, the fibrils are mineralized with calcium hydroxyapatite.

The protein resides in the secreted. It is found in the extracellular space. The protein localises to the extracellular matrix. Its function is as follows. Type I collagen is a member of group I collagen (fibrillar forming collagen). The chain is Collagen alpha-2(I) chain from Cyclopes didactylus (Silky anteater).